Here is a 119-residue protein sequence, read N- to C-terminus: MKQVAFVFTQAPHGTSAGREGLDALLAMSALTEEIGVFFLSDGVFQILPGQHPQAVLSRDYISTFKVLPLYDIERCYICRESLQERGLSEEHAFVIDVEALDAAALRERLDDYDVVLTF.

This sequence belongs to the DsrF/TusC family. Heterohexamer, formed by a dimer of trimers. The hexameric TusBCD complex contains 2 copies each of TusB, TusC and TusD. The TusBCD complex interacts with TusE.

The protein localises to the cytoplasm. In terms of biological role, part of a sulfur-relay system required for 2-thiolation of 5-methylaminomethyl-2-thiouridine (mnm(5)s(2)U) at tRNA wobble positions. The polypeptide is Protein TusC (Cronobacter sakazakii (strain ATCC BAA-894) (Enterobacter sakazakii)).